Reading from the N-terminus, the 258-residue chain is Phosphate import ATP-binding protein PstB (258 aa).

An ABC transporter domain is found at 5 to 253 (LDLNDVNIYY…PTKKETEDYI (249 aa)). 37-44 (GPSGCGKS) is an ATP binding site.

It belongs to the ABC transporter superfamily. Phosphate importer (TC 3.A.1.7) family. In terms of assembly, the complex is composed of two ATP-binding proteins (PstB), two transmembrane proteins (PstC and PstA) and a solute-binding protein (PstS).

It localises to the cell membrane. It catalyses the reaction phosphate(out) + ATP + H2O = ADP + 2 phosphate(in) + H(+). Part of the ABC transporter complex PstSACB involved in phosphate import. Responsible for energy coupling to the transport system. This is Phosphate import ATP-binding protein PstB from Corynebacterium jeikeium (strain K411).